The chain runs to 412 residues: Divalent metal cation transporter MntH (412 aa).

Topologically, residues 1 to 19 are cytoplasmic; sequence MTNYRVESSSGRAARKMRL. The chain crosses the membrane as a helical span at residues 20–39; sequence ALMGPAFIAAIGYIDPGNFA. Residues 40–51 are Periplasmic-facing; that stretch reads TNIQAGASFGYQ. Residues 52 to 71 traverse the membrane as a helical segment; it reads LLWVVVWANLMAMLIQILSA. Topologically, residues 72–95 are cytoplasmic; the sequence is KLGIATGKNLAEQIRDHYPRPFVW. The helical transmembrane segment at 96 to 118 threads the bilayer; it reads FYWVQAEIIAMATDLAEFIGAAI. The Periplasmic segment spans residues 119–125; the sequence is GFKLILG. The helical transmembrane segment at 126–145 threads the bilayer; that stretch reads VSLLQGAVLTGIATFLILML. Over 146 to 155 the chain is Cytoplasmic; sequence QRRGQKPLEK. Residues 156 to 175 form a helical membrane-spanning segment; the sequence is VIGGLLLFVAAAYIVELIFS. Residues 176–196 are Periplasmic-facing; that stretch reads QPNLAQLGKGMVIPSLPTSEA. A helical membrane pass occupies residues 197 to 220; the sequence is VFLAAGVLGATIMPHVIYLHSSLT. The Cytoplasmic portion of the chain corresponds to 221–238; sequence QHLHGGSRQQRYSATKWD. The helical transmembrane segment at 239-258 threads the bilayer; that stretch reads VAIAMTIAGFVNLAMMATAA. Residues 259–276 are Periplasmic-facing; sequence AAFHFSGHTGVADLDEAY. A helical membrane pass occupies residues 277–297; the sequence is LTLQPLLSHAAATVFGLSLVA. Over 298-327 the chain is Cytoplasmic; that stretch reads AGLSSTVVGTLAGQVVMQGFIRFHIPLWVR. Residues 328-344 traverse the membrane as a helical segment; sequence RTVTMLPSFIVILMGLD. Over 345 to 350 the chain is Periplasmic; it reads PTRILV. The helical transmembrane segment at 351–370 threads the bilayer; that stretch reads MSQVLLSFGIALALVPLLIF. Residues 371–387 are Cytoplasmic-facing; that stretch reads TSDSKLMGDLVNSKRVK. A helical transmembrane segment spans residues 388–406; sequence QTGWVIVVLVVALNIWLLV. Over 407-412 the chain is Periplasmic; that stretch reads GTALGL.

The protein belongs to the NRAMP family.

It localises to the cell inner membrane. H(+)-stimulated, divalent metal cation uptake system. This is Divalent metal cation transporter MntH from Escherichia coli O127:H6 (strain E2348/69 / EPEC).